A 412-amino-acid chain; its full sequence is Peptidase T (412 aa).

H84 contacts Zn(2+). D86 is an active-site residue. D146 provides a ligand contact to Zn(2+). Catalysis depends on E179, which acts as the Proton acceptor. Residues E180, D202, and H385 each contribute to the Zn(2+) site.

Belongs to the peptidase M20B family. It depends on Zn(2+) as a cofactor.

It is found in the cytoplasm. It carries out the reaction Release of the N-terminal residue from a tripeptide.. Its function is as follows. Cleaves the N-terminal amino acid of tripeptides. The sequence is that of Peptidase T from Haemophilus influenzae (strain PittEE).